The primary structure comprises 196 residues: Phosphate-specific transport system accessory protein PhoU homolog (196 aa).

This sequence belongs to the PhoU family. In terms of assembly, homodimer.

It is found in the cytoplasm. Its function is as follows. Plays a role in the regulation of phosphate uptake. This Archaeoglobus fulgidus (strain ATCC 49558 / DSM 4304 / JCM 9628 / NBRC 100126 / VC-16) protein is Phosphate-specific transport system accessory protein PhoU homolog.